Here is a 560-residue protein sequence, read N- to C-terminus: Putative transport protein VFMJ11_0927 (560 aa).

The next 5 helical transmembrane spans lie at L8–A28, L37–F57, F66–L86, L94–F114, and N161–A181. RCK C-terminal domains follow at residues R203 to G292 and K293 to F376. 5 helical membrane-spanning segments follow: residues L386–F406, V409–L429, G451–F471, V478–A498, and A539–L559.

Belongs to the AAE transporter (TC 2.A.81) family. YbjL subfamily.

It localises to the cell membrane. The polypeptide is Putative transport protein VFMJ11_0927 (Aliivibrio fischeri (strain MJ11) (Vibrio fischeri)).